A 369-amino-acid polypeptide reads, in one-letter code: DNA replication and repair protein RecF (369 aa).

G30–T37 is an ATP binding site.

It belongs to the RecF family.

It localises to the cytoplasm. The RecF protein is involved in DNA metabolism; it is required for DNA replication and normal SOS inducibility. RecF binds preferentially to single-stranded, linear DNA. It also seems to bind ATP. This chain is DNA replication and repair protein RecF, found in Streptococcus agalactiae serotype III (strain NEM316).